A 303-amino-acid polypeptide reads, in one-letter code: Regulatory protein PocR (303 aa).

The HTH araC/xylS-type domain maps to 195 to 293; it reads KKALRYIDAH…QVTPQAYRQQ (99 aa). 2 consecutive DNA-binding regions (H-T-H motif) follow at residues 212–233 and 260–283; these read EDVA…KKYQ and IASI…RQTY.

It participates in cofactor biosynthesis; adenosylcobalamin biosynthesis [regulation]. Its pathway is polyol metabolism; 1,2-propanediol degradation [regulation]. Its function is as follows. Positive regulatory protein of pdu and cob operons. Positively autoregulates its own expression. The protein is Regulatory protein PocR (pocR) of Salmonella typhimurium (strain LT2 / SGSC1412 / ATCC 700720).